The sequence spans 369 residues: Ubiquitin-conjugating enzyme E2 Q2 (369 aa).

The disordered stretch occupies residues 117 to 143 (DQPLPTGQNGTTEEVTSEEEEEEEMAE). Acidic residues predominate over residues 131 to 143 (VTSEEEEEEEMAE). The 165-residue stretch at 198–362 (QASDRLMKEL…VQIHEKNGWY (165 aa)) folds into the UBC core domain. Cysteine 298 functions as the Glycyl thioester intermediate in the catalytic mechanism.

It belongs to the ubiquitin-conjugating enzyme family. Post-translationally, auto-ubiquitinated in vitro. Detected at embryo implantation sites in the luminal epithelium of pregnant endometrium. Detected at low levels in ovary and liver.

Its subcellular location is the cytoplasm. The catalysed reaction is S-ubiquitinyl-[E1 ubiquitin-activating enzyme]-L-cysteine + [E2 ubiquitin-conjugating enzyme]-L-cysteine = [E1 ubiquitin-activating enzyme]-L-cysteine + S-ubiquitinyl-[E2 ubiquitin-conjugating enzyme]-L-cysteine.. It functions in the pathway protein modification; protein ubiquitination. Functionally, accepts ubiquitin from the E1 complex and catalyzes its covalent attachment to other proteins. In vitro catalyzes 'Lys-48'-linked polyubiquitination. This Oryctolagus cuniculus (Rabbit) protein is Ubiquitin-conjugating enzyme E2 Q2 (UBE2Q2).